Reading from the N-terminus, the 158-residue chain is Putative pre-16S rRNA nuclease (158 aa).

The protein belongs to the YqgF nuclease family.

The protein resides in the cytoplasm. Functionally, could be a nuclease involved in processing of the 5'-end of pre-16S rRNA. The chain is Putative pre-16S rRNA nuclease from Paracoccus denitrificans (strain Pd 1222).